A 398-amino-acid polypeptide reads, in one-letter code: S-adenosylmethionine synthase (398 aa).

136–141 contributes to the ATP binding site; it reads GTGSSD.

Belongs to the AdoMet synthase 2 family. The cofactor is Mg(2+).

The catalysed reaction is L-methionine + ATP + H2O = S-adenosyl-L-methionine + phosphate + diphosphate. The protein operates within amino-acid biosynthesis; S-adenosyl-L-methionine biosynthesis; S-adenosyl-L-methionine from L-methionine: step 1/1. Catalyzes the formation of S-adenosylmethionine from methionine and ATP. This chain is S-adenosylmethionine synthase, found in Methanosarcina barkeri (strain Fusaro / DSM 804).